A 305-amino-acid chain; its full sequence is Dihydroorotate dehydrogenase B (NAD(+)), catalytic subunit (305 aa).

FMN-binding positions include serine 23 and 47-48 (KG). Substrate is bound by residues lysine 47 and 71–75 (NAIGL). The FMN site is built by asparagine 101 and asparagine 129. Asparagine 129 contacts substrate. The active-site Nucleophile is the cysteine 132. Lysine 167 and isoleucine 193 together coordinate FMN. Position 194–195 (194–195 (NT)) interacts with substrate. FMN contacts are provided by residues glycine 219, 245-246 (GG), and 267-268 (GT).

It belongs to the dihydroorotate dehydrogenase family. Type 1 subfamily. Heterotetramer of 2 PyrK and 2 PyrD type B subunits. FMN is required as a cofactor.

It is found in the cytoplasm. It carries out the reaction (S)-dihydroorotate + NAD(+) = orotate + NADH + H(+). The protein operates within pyrimidine metabolism; UMP biosynthesis via de novo pathway; orotate from (S)-dihydroorotate (NAD(+) route): step 1/1. Its function is as follows. Catalyzes the conversion of dihydroorotate to orotate with NAD(+) as electron acceptor. The polypeptide is Dihydroorotate dehydrogenase B (NAD(+)), catalytic subunit (pyrD) (Geobacter sulfurreducens (strain ATCC 51573 / DSM 12127 / PCA)).